The primary structure comprises 480 residues: Bifunctional protein HldE (480 aa).

The ribokinase stretch occupies residues Met-1–Gln-316. Position 192–195 (Asn-192–Glu-195) interacts with ATP. The active site involves Asp-261. Residues Phe-342 to Gln-480 are cytidylyltransferase.

This sequence in the N-terminal section; belongs to the carbohydrate kinase PfkB family. It in the C-terminal section; belongs to the cytidylyltransferase family. Homodimer.

The enzyme catalyses D-glycero-beta-D-manno-heptose 7-phosphate + ATP = D-glycero-beta-D-manno-heptose 1,7-bisphosphate + ADP + H(+). It catalyses the reaction D-glycero-beta-D-manno-heptose 1-phosphate + ATP + H(+) = ADP-D-glycero-beta-D-manno-heptose + diphosphate. It participates in nucleotide-sugar biosynthesis; ADP-L-glycero-beta-D-manno-heptose biosynthesis; ADP-L-glycero-beta-D-manno-heptose from D-glycero-beta-D-manno-heptose 7-phosphate: step 1/4. Its pathway is nucleotide-sugar biosynthesis; ADP-L-glycero-beta-D-manno-heptose biosynthesis; ADP-L-glycero-beta-D-manno-heptose from D-glycero-beta-D-manno-heptose 7-phosphate: step 3/4. Its function is as follows. Catalyzes the phosphorylation of D-glycero-D-manno-heptose 7-phosphate at the C-1 position to selectively form D-glycero-beta-D-manno-heptose-1,7-bisphosphate. In terms of biological role, catalyzes the ADP transfer from ATP to D-glycero-beta-D-manno-heptose 1-phosphate, yielding ADP-D-glycero-beta-D-manno-heptose. In Hydrogenovibrio crunogenus (strain DSM 25203 / XCL-2) (Thiomicrospira crunogena), this protein is Bifunctional protein HldE.